The following is a 700-amino-acid chain: Tectonic-2 (700 aa).

A signal peptide spans 1-25 (MGSLSPLSFLWGLLLLQGVLRPLRG). At 26–665 (DPVFIPPFIR…YYQGEPRPQC (640 aa)) the chain is on the extracellular side. Asn-76, Asn-82, Asn-146, Asn-156, and Asn-389 each carry an N-linked (GlcNAc...) asparagine glycan. The chain crosses the membrane as a helical span at residues 666-682 (VAKGLMLLSLLMLAILL). Residues 683-700 (RHPWVGMCKAWSSASIQH) lie on the Cytoplasmic side of the membrane.

The protein belongs to the tectonic family. In terms of assembly, part of the tectonic-like complex (also named B9 complex).

The protein localises to the membrane. The protein resides in the cytoplasm. It is found in the cytoskeleton. It localises to the cilium basal body. In terms of biological role, component of the tectonic-like complex, a complex localized at the transition zone of primary cilia and acting as a barrier that prevents diffusion of transmembrane proteins between the cilia and plasma membranes. Required for hedgehog signaling transduction. The chain is Tectonic-2 (Tctn2) from Rattus norvegicus (Rat).